A 528-amino-acid polypeptide reads, in one-letter code: MTRDFKPGDLIFAKMKGYPHWPARVDEVPDGAVKPPTNKLPIFFFGTHETAFLGPKDIFPYSENKEKYGKPNKRKGFNEGLWEIDNNPKVKFSSQQASTKQSNASSDVEVEEKETNVSKEDTDQEEKASNEDVTKAVDITTPKAARRGRKRKAEKQVDTEEAGMVTAATASNVKASPKRGRPAATEVKIPKPRGRPKVVKQPCPSDGDMVIDEDKSKKKGPEEKQPKKQLKKEEEGQKEEEKPRKEPDKKEGKKEVESKRKNLAKPGVTSTSDSEDEDDQEGEKKRKGGRNFQAAHRRNMLKGQHEKEAGDRKRKQEEQMETEQQNKDEGKKPEVKKVEKKRETSMDSRLQRIHAEIKNSLKIDNLDVNRCIEALDELASLQVTMQQAQKHTEMITTLKKIRRFKVSQVIMEKSTMLYNKFKNMFLVGEGDSVITQVLNKSLAEQRQHEEANKTKDQGKKGPNKKLEKEPTGTKSLNGGSDAQESNHPQHNGDSNEDGKDSREASSKTKPPGEEREAEISLKESTLDN.

The 58-residue stretch at 7–64 (PGDLIFAKMKGYPHWPARVDEVPDGAVKPPTNKLPIFFFGTHETAFLGPKDIFPYSEN) folds into the PWWP domain. Residues 61 to 348 (YSENKEKYGK…EKKRETSMDS (288 aa)) are disordered. Residue Lys-75 forms a Glycyl lysine isopeptide (Lys-Gly) (interchain with G-Cter in SUMO2) linkage. Over residues 92–106 (FSSQQASTKQSNASS) the composition is skewed to polar residues. Residues Ser-102, Ser-105, and Ser-106 each carry the phosphoserine modification. Positions 113-135 (KETNVSKEDTDQEEKASNEDVTK) are enriched in basic and acidic residues. Phosphothreonine is present on residues Thr-115 and Thr-122. At Ser-129 the chain carries Phosphoserine. Thr-141 carries the phosphothreonine modification. Residues 144 to 153 (AARRGRKRKA) show a composition bias toward basic residues. The Nuclear localization signal signature appears at 146 to 156 (RRGRKRKAEKQ). 2 positions are modified to phosphoserine: Ser-176 and Ser-205. A compositionally biased stretch (basic and acidic residues) spans 212-260 (DEDKSKKKGPEEKQPKKQLKKEEEGQKEEEKPRKEPDKKEGKKEVESKR). Ser-270 carries the phosphoserine modification. Residue Thr-271 is modified to Phosphothreonine. A phosphoserine mark is found at Ser-272 and Ser-274. Positions 285 to 300 (KRKGGRNFQAAHRRNM) are enriched in basic residues. The segment covering 303–348 (GQHEKEAGDRKRKQEEQMETEQQNKDEGKKPEVKKVEKKRETSMDS) has biased composition (basic and acidic residues). Coiled coils occupy residues 306-332 (EKEAGDRKRKQEEQMETEQQNKDEGKK) and 369-393 (NRCIEALDELASLQVTMQQAQKHTE). Positions 338–415 (VEKKRETSMD…VSQVIMEKST (78 aa)) are integrase-binding domain (IBD). Ser-432 carries the phosphoserine modification. Residue Thr-435 is modified to Phosphothreonine. Residue Ser-441 is modified to Phosphoserine. Residues 444–471 (EQRQHEEANKTKDQGKKGPNKKLEKEPT) are compositionally biased toward basic and acidic residues. The interval 444–528 (EQRQHEEANK…ISLKESTLDN (85 aa)) is disordered. A compositionally biased stretch (polar residues) spans 472-492 (GTKSLNGGSDAQESNHPQHNG). Residues 496 to 528 (EDGKDSREASSKTKPPGEEREAEISLKESTLDN) are compositionally biased toward basic and acidic residues. Arg-515 is modified (citrulline). Residue Ser-520 is modified to Phosphoserine. The residue at position 525 (Thr-525) is a Phosphothreonine.

The protein belongs to the HDGF family. Monomer. Interacts with IFRD1/PC4. Interacts (via IBD domain) with POGZ (via IBM motif) and CDCA7L (via IBM motifs). Interacts (via IBD domain) with KMT2A (via IBM motifs) with a moderate affinity whereas interacts with the KMT2A-MEN1 complex with a greater affinity; MEN1 enhances interaction of KMT2A with PSIP1. Interacts (via IBD domain) with IWS1 (via IBM motif), MED1 (via IBM motif) and DBF4 (via IBM motifs). In terms of processing, citrullinated by PADI4.

Its subcellular location is the nucleus. Transcriptional coactivator involved in neuroepithelial stem cell differentiation and neurogenesis. Involved in particular in lens epithelial cell gene regulation and stress responses. May play an important role in lens epithelial to fiber cell terminal differentiation. May play a protective role during stress-induced apoptosis. In Mus musculus (Mouse), this protein is PC4 and SFRS1-interacting protein (Psip1).